A 179-amino-acid polypeptide reads, in one-letter code: Large ribosomal subunit protein uL6 (179 aa).

Belongs to the universal ribosomal protein uL6 family. In terms of assembly, part of the 50S ribosomal subunit.

This protein binds to the 23S rRNA, and is important in its secondary structure. It is located near the subunit interface in the base of the L7/L12 stalk, and near the tRNA binding site of the peptidyltransferase center. The chain is Large ribosomal subunit protein uL6 from Rhodococcus jostii (strain RHA1).